The chain runs to 357 residues: uncharacterized protein (357 aa).

9 helical membrane-spanning segments follow: residues 13-33, 44-64, 72-92, 148-168, 181-201, 203-223, 266-286, 293-313, and 327-347; these read PVTGIYNILLFNLFPLATYLV, IACTLLCSITVILAYRMCAVY, VSTFGLAYGFLIMMSLRTCFL, VLTYKSLGIRTAVYVGAFCFV, LPISANPWYIQVAFCVTSGFF, YLFINALYYLFAIIFVPLGIW, IALTGSKFLASCSCFFLSALF, SISGRCSPAFFFQLLIQPFLI, and YWVLIIEMLINGTYGMGVVLL.

The protein localises to the mitochondrion membrane. This is an uncharacterized protein from Schizosaccharomyces pombe (strain 972 / ATCC 24843) (Fission yeast).